A 188-amino-acid polypeptide reads, in one-letter code: Peptide deformylase (188 aa).

Fe cation contacts are provided by Cys-107 and His-149. Residue Glu-150 is part of the active site. His-153 is a binding site for Fe cation.

This sequence belongs to the polypeptide deformylase family. Requires Fe(2+) as cofactor.

It carries out the reaction N-terminal N-formyl-L-methionyl-[peptide] + H2O = N-terminal L-methionyl-[peptide] + formate. Removes the formyl group from the N-terminal Met of newly synthesized proteins. Requires at least a dipeptide for an efficient rate of reaction. N-terminal L-methionine is a prerequisite for activity but the enzyme has broad specificity at other positions. This chain is Peptide deformylase, found in Thermosynechococcus vestitus (strain NIES-2133 / IAM M-273 / BP-1).